The primary structure comprises 199 residues: Tegument protein UL14 homolog (199 aa).

The span at 176–191 (TDMNQMQPQPISKNEN) shows a compositional bias: polar residues. Positions 176-199 (TDMNQMQPQPISKNENPPTPHTDV) are disordered.

Belongs to the alphaherpesvirinae HHV-1 UL14 protein family.

The protein localises to the virion tegument. It is found in the host cytoplasm. It localises to the host nucleus. Functionally, contributes to the nuclear transport of the viral transcriptional activator VP16 homolog during the early phase of infection. Therefore, participates indirectly in the regulation of the immediate-early gene expression. Additionally, seems to be important for efficient nuclear targeting of capsids. The sequence is that of Tegument protein UL14 homolog from Varicella-zoster virus (strain Dumas) (HHV-3).